A 166-amino-acid polypeptide reads, in one-letter code: 6,7-dimethyl-8-ribityllumazine synthase (166 aa).

Residues F24, 58–60 (ALE), and 82–84 (AVV) each bind 5-amino-6-(D-ribitylamino)uracil. 87 to 88 (ET) is a binding site for (2S)-2-hydroxy-3-oxobutyl phosphate. The Proton donor role is filled by H90. N115 is a binding site for 5-amino-6-(D-ribitylamino)uracil. (2S)-2-hydroxy-3-oxobutyl phosphate is bound at residue R129.

Belongs to the DMRL synthase family.

The catalysed reaction is (2S)-2-hydroxy-3-oxobutyl phosphate + 5-amino-6-(D-ribitylamino)uracil = 6,7-dimethyl-8-(1-D-ribityl)lumazine + phosphate + 2 H2O + H(+). The protein operates within cofactor biosynthesis; riboflavin biosynthesis; riboflavin from 2-hydroxy-3-oxobutyl phosphate and 5-amino-6-(D-ribitylamino)uracil: step 1/2. Catalyzes the formation of 6,7-dimethyl-8-ribityllumazine by condensation of 5-amino-6-(D-ribitylamino)uracil with 3,4-dihydroxy-2-butanone 4-phosphate. This is the penultimate step in the biosynthesis of riboflavin. This is 6,7-dimethyl-8-ribityllumazine synthase from Cupriavidus necator (strain ATCC 17699 / DSM 428 / KCTC 22496 / NCIMB 10442 / H16 / Stanier 337) (Ralstonia eutropha).